A 196-amino-acid polypeptide reads, in one-letter code: Nucleoside triphosphate pyrophosphatase (196 aa).

Aspartate 73 acts as the Proton acceptor in catalysis.

It belongs to the Maf family. A divalent metal cation is required as a cofactor.

Its subcellular location is the cytoplasm. The catalysed reaction is a ribonucleoside 5'-triphosphate + H2O = a ribonucleoside 5'-phosphate + diphosphate + H(+). The enzyme catalyses a 2'-deoxyribonucleoside 5'-triphosphate + H2O = a 2'-deoxyribonucleoside 5'-phosphate + diphosphate + H(+). Nucleoside triphosphate pyrophosphatase. May have a dual role in cell division arrest and in preventing the incorporation of modified nucleotides into cellular nucleic acids. This Anaplasma marginale (strain Florida) protein is Nucleoside triphosphate pyrophosphatase.